A 907-amino-acid chain; its full sequence is Phototropin-2 (907 aa).

The interval 28-84 (ATAGLEIVAEDAPSGSSGAHQQQAWRPVAPATAGRDSGGTGSGKSSVDGGVGRASHD) is disordered. A compositionally biased stretch (polar residues) spans 41–51 (SGSSGAHQQQA). The PAS 1 domain maps to 89–162 (VSQELKDALS…AKIRDAVKHG (74 aa)). FMN contacts are provided by residues 138–143 (NCRFLQ), Arg-156, Asn-171, Asn-181, and Gln-202. Cys-139 is modified (S-4a-FMN cysteine). A PAC 1 domain is found at 163 to 217 (RSFCGRLLNYRKDGAPFWNLLTVTPIRDDNGKVIKFIGMQVEVSKYTEGLSDKRM). The interval 332 to 363 (RSSVGSREAPAVVEEPAPAPPPAPEVVERTDS) is disordered. The PAS 2 domain maps to 375–448 (QGIDLATTLE…DKIREAIREQ (74 aa)). FMN-binding positions include 424 to 429 (NCRFLQ), Arg-442, Asn-457, Asn-467, and Gln-488. S-4a-FMN cysteine is present on Cys-425. The 55-residue stretch at 449–503 (KEITVQLINYTKSGKKFWNLFHLQPMRDQKGELQYFIGVQLDGSDHVEPLRNRLS) folds into the PAC 2 domain. The Protein kinase domain occupies 576–863 (FKPVKPLGCG…ANDIKQHSFF (288 aa)). ATP is bound by residues 582–590 (LGCGDTGSV) and Lys-605. The active-site Proton acceptor is the Asp-701.

The protein belongs to the protein kinase superfamily. Ser/Thr protein kinase family. In terms of assembly, homodimer. Requires FMN as cofactor. Autophosphorylated in response to blue light irradiation. In terms of processing, 2 molecules of FMN bind covalently to cysteines after exposure to blue light and are reversed in the dark. Expressed at low levels in leaves of dark-grown seedlings.

It catalyses the reaction L-seryl-[protein] + ATP = O-phospho-L-seryl-[protein] + ADP + H(+). The enzyme catalyses L-threonyl-[protein] + ATP = O-phospho-L-threonyl-[protein] + ADP + H(+). Its function is as follows. Protein kinase that acts as a blue light photoreceptor in a signal-transduction pathway for phototropic responses. Regulates a wide range of physiological activities in plants that maximize the efficiency of photosynthesis, such as chloroplast relocations, stomata opening, and leaf expansion. The chain is Phototropin-2 (PHOT2) from Oryza sativa subsp. japonica (Rice).